A 390-amino-acid chain; its full sequence is Anhydro-N-acetylmuramic acid kinase (390 aa).

ATP is bound at residue 9–16; that stretch reads GTSLDGID.

Belongs to the anhydro-N-acetylmuramic acid kinase family.

The catalysed reaction is 1,6-anhydro-N-acetyl-beta-muramate + ATP + H2O = N-acetyl-D-muramate 6-phosphate + ADP + H(+). It functions in the pathway amino-sugar metabolism; 1,6-anhydro-N-acetylmuramate degradation. Its pathway is cell wall biogenesis; peptidoglycan recycling. Functionally, catalyzes the specific phosphorylation of 1,6-anhydro-N-acetylmuramic acid (anhMurNAc) with the simultaneous cleavage of the 1,6-anhydro ring, generating MurNAc-6-P. Is required for the utilization of anhMurNAc either imported from the medium or derived from its own cell wall murein, and thus plays a role in cell wall recycling. In Bacillus cereus (strain B4264), this protein is Anhydro-N-acetylmuramic acid kinase.